Consider the following 214-residue polypeptide: Alkaline phosphatase-like protein (214 aa).

The next 4 helical transmembrane spans lie at 3–23 (EIII…LIMI), 48–68 (LGII…ALIL), 141–161 (FLIL…SLGA), and 177–197 (YSSV…LLFV).

This sequence belongs to the DedA family.

It is found in the cell membrane. The chain is Alkaline phosphatase-like protein (apl) from Lactococcus lactis subsp. cremoris (strain MG1363).